A 236-amino-acid polypeptide reads, in one-letter code: tRNA (guanine-N(1)-)-methyltransferase (236 aa).

S-adenosyl-L-methionine-binding positions include Gly-114 and Ile-134 to Leu-139.

Belongs to the RNA methyltransferase TrmD family. As to quaternary structure, homodimer.

The protein localises to the cytoplasm. It catalyses the reaction guanosine(37) in tRNA + S-adenosyl-L-methionine = N(1)-methylguanosine(37) in tRNA + S-adenosyl-L-homocysteine + H(+). Functionally, specifically methylates guanosine-37 in various tRNAs. The polypeptide is tRNA (guanine-N(1)-)-methyltransferase (Wolbachia pipientis wMel).